The sequence spans 404 residues: Cytoplasmic tRNA 2-thiolation protein 2 (404 aa).

This sequence belongs to the CTU2/NCS2 family.

Its subcellular location is the cytoplasm. It participates in tRNA modification; 5-methoxycarbonylmethyl-2-thiouridine-tRNA biosynthesis. Functionally, plays a central role in 2-thiolation of mcm(5)S(2)U at tRNA wobble positions of tRNA(Lys), tRNA(Glu) and tRNA(Gln). May act by forming a heterodimer with NCS6/CTU1 that ligates sulfur from thiocarboxylated URM1 onto the uridine of tRNAs at wobble position. The protein is Cytoplasmic tRNA 2-thiolation protein 2 of Drosophila mojavensis (Fruit fly).